Consider the following 91-residue polypeptide: UPF0250 protein NGO_0791 (91 aa).

This sequence belongs to the UPF0250 family.

This is UPF0250 protein NGO_0791 from Neisseria gonorrhoeae (strain ATCC 700825 / FA 1090).